We begin with the raw amino-acid sequence, 230 residues long: 3-beta-hydroxysteroid-Delta(8),Delta(7)-isomerase (230 aa).

T2 is modified (N-acetylthreonine). 4 consecutive transmembrane segments (helical) span residues 29 to 49 (SHILVGLFSISGGLIVITWLL), 66 to 86 (LCWFAVCTFIHLVIEGWFSLY), 121 to 141 (METVTACLWGPLSLWVVIAFL), and 185 to 205 (FWFYFVFLNAVWLVIPSILVL). Residues 61–204 (GRRLALCWFA…VWLVIPSILV (144 aa)) enclose the EXPERA domain.

Belongs to the EBP family.

The protein localises to the endoplasmic reticulum membrane. Its subcellular location is the nucleus envelope. The protein resides in the cytoplasmic vesicle. It catalyses the reaction lathosterol = 5alpha-cholest-8-en-3beta-ol. The enzyme catalyses zymosterol = 5alpha-cholesta-7,24-dien-3beta-ol. It carries out the reaction 5,6alpha-epoxy-5alpha-cholestan-3beta-ol + H2O = 5alpha-cholestane-3beta,5,6beta-triol. The catalysed reaction is 5,6beta-epoxy-5beta-cholestan-3beta-ol + H2O = 5alpha-cholestane-3beta,5,6beta-triol. It participates in steroid biosynthesis; cholesterol biosynthesis. Isomerase that catalyzes the conversion of Delta(8)-sterols to their corresponding Delta(7)-isomers. Functionally, component of the microsomal antiestrogen binding site (AEBS), a multiproteic complex at the ER membrane that consists of an association between EBP and 7-dehydrocholesterol reductase/DHCR7. This complex is responsible for cholesterol-5,6-epoxide hydrolase (ChEH) activity, which consists in the hydration of cholesterol-5,6-epoxides (5,6-EC) into cholestane-3beta,5alpha,6beta-triol (CT). The precise role of each component of this complex has not been described yet. The chain is 3-beta-hydroxysteroid-Delta(8),Delta(7)-isomerase from Mus musculus (Mouse).